Consider the following 456-residue polypeptide: Bifunctional protein GlmU (456 aa).

The segment at 1-229 (MTKKALSAVI…VMEVEGANNR (229 aa)) is pyrophosphorylase. Residues 11–14 (LAAG), lysine 25, glutamine 76, 81–82 (GT), 103–105 (YGD), glycine 140, glutamate 154, asparagine 169, and asparagine 227 contribute to the UDP-N-acetyl-alpha-D-glucosamine site. Residue aspartate 105 participates in Mg(2+) binding. Asparagine 227 contributes to the Mg(2+) binding site. A linker region spans residues 230-250 (LQLAALERYFQNKQASKLLLE). Positions 251 to 456 (GVMIYDPARF…QGWQRPIKKK (206 aa)) are N-acetyltransferase. Residues arginine 333 and lysine 351 each contribute to the UDP-N-acetyl-alpha-D-glucosamine site. Residue histidine 363 is the Proton acceptor of the active site. Tyrosine 366 and asparagine 377 together coordinate UDP-N-acetyl-alpha-D-glucosamine. Acetyl-CoA contacts are provided by residues alanine 380, 386–387 (NY), serine 405, alanine 423, and arginine 440.

The protein in the N-terminal section; belongs to the N-acetylglucosamine-1-phosphate uridyltransferase family. It in the C-terminal section; belongs to the transferase hexapeptide repeat family. Homotrimer. It depends on Mg(2+) as a cofactor.

It is found in the cytoplasm. The catalysed reaction is alpha-D-glucosamine 1-phosphate + acetyl-CoA = N-acetyl-alpha-D-glucosamine 1-phosphate + CoA + H(+). It catalyses the reaction N-acetyl-alpha-D-glucosamine 1-phosphate + UTP + H(+) = UDP-N-acetyl-alpha-D-glucosamine + diphosphate. The protein operates within nucleotide-sugar biosynthesis; UDP-N-acetyl-alpha-D-glucosamine biosynthesis; N-acetyl-alpha-D-glucosamine 1-phosphate from alpha-D-glucosamine 6-phosphate (route II): step 2/2. Its pathway is nucleotide-sugar biosynthesis; UDP-N-acetyl-alpha-D-glucosamine biosynthesis; UDP-N-acetyl-alpha-D-glucosamine from N-acetyl-alpha-D-glucosamine 1-phosphate: step 1/1. It functions in the pathway bacterial outer membrane biogenesis; LPS lipid A biosynthesis. Catalyzes the last two sequential reactions in the de novo biosynthetic pathway for UDP-N-acetylglucosamine (UDP-GlcNAc). The C-terminal domain catalyzes the transfer of acetyl group from acetyl coenzyme A to glucosamine-1-phosphate (GlcN-1-P) to produce N-acetylglucosamine-1-phosphate (GlcNAc-1-P), which is converted into UDP-GlcNAc by the transfer of uridine 5-monophosphate (from uridine 5-triphosphate), a reaction catalyzed by the N-terminal domain. The sequence is that of Bifunctional protein GlmU from Haemophilus influenzae (strain 86-028NP).